We begin with the raw amino-acid sequence, 90 residues long: UPF0297 protein lmo1503 (90 aa).

Belongs to the UPF0297 family.

This chain is UPF0297 protein lmo1503, found in Listeria monocytogenes serovar 1/2a (strain ATCC BAA-679 / EGD-e).